A 533-amino-acid chain; its full sequence is Calcium/calmodulin-dependent protein kinase type II (533 aa).

Residues 18–26 and lysine 41 contribute to the ATP site; that span reads LGKGAFSVV. Aspartate 134 acts as the Proton acceptor in catalysis. The residue at position 284 (threonine 284) is a Phosphothreonine; by autocatalysis. Composition is skewed to polar residues over residues 316-345 and 377-391; these read TSDS…QPTS and PPST…SQTI. 2 disordered regions span residues 316-347 and 369-400; these read TSDS…TSPA and LLNK…EKAQ.

It belongs to the protein kinase superfamily. CAMK Ser/Thr protein kinase family. CaMK subfamily. In terms of assembly, dodecamer. Subunits are tightly packed around a central ring-shaped scaffold with extensive contacts between the regulatory segment of one kinase and the catalytic domain of another enabling cooperative activation of a subunit by the adjacent molecule. Interacts with and phosphorylates daf-16; the interaction promotes daf-16 nuclear localization. Interacts with egl-2 and tir-1. Interacts with nsy-1. Requires Mg(2+) as cofactor.

It localises to the cytoplasm. The protein resides in the cell projection. Its subcellular location is the axon. The protein localises to the perikaryon. The catalysed reaction is L-seryl-[protein] + ATP = O-phospho-L-seryl-[protein] + ADP + H(+). It carries out the reaction L-threonyl-[protein] + ATP = O-phospho-L-threonyl-[protein] + ADP + H(+). With respect to regulation, ca(2+)/calmodulin binding removes an autoinhibitory regulatory segment located C-terminal to the kinase domain. This releases the catalytic activity of the enzyme and makes accessible a regulatory residue Thr-284. Phosphorylation of Thr-284 by another kinase domain within the oligomeric holoenzyme keeps CaMKII active in the absence of Ca(2+)/calmodulin by preventing the rebinding of the regulatory segment to the kinase domain and by increasing the affinity of calmodulin for the enzyme. Can respond to high-frequency Ca(2+) pulses to become Ca(2+) independent. Role in locomotion and neuronal cell fate specification. Required for the regulation of synaptic density, egg laying, defecation, and meiotic maturation. Required for viability under chronic osmotic stress in which it acts downstream of osr-1. Regulates the synaptic trafficking of glr-1. Bidirectional modulator of neurotransmitter release with negative modulatory effects mainly mediated via slo-1 activation. May suppress the functional response to an internal pacemaker, perhaps by modulating the activity of the IP3 receptor. The polypeptide is Calcium/calmodulin-dependent protein kinase type II (Caenorhabditis briggsae).